The sequence spans 579 residues: MSAAIAALAASYGSGSGSESDSDSEGSRCPLPAADSLMHLTKSPSAKLSLTVAVDSAPEVAVKEDLETGVHLDPAVKEVQYNPTYETMFAPEFGPENPFRTQQMAAPRNMLSGYAEPAHINDFMFEQQRRTFATYGYALDPSLDNHQVSAKYIGSVEEAEKNQGLTVFETGQKKTEKRKKFKENDASNIDGFLGPWAKYVDEKDVAKPSEEEQKELDEITAKRQKKGKQEEEKPGEEKTILHVKEMYDYQGRSYLHIPQDVGVNLRSSVPPEKCYLPKKQIHVWSGHTKGVSAVRLFPLSGHLLLSCSMDCKIKLWEVYGDRRCLRTFIGHSKAVRDICFNTAGTQFLSAAYDRYLKLWDTETGQCISRFTNRKVPYCVKFNPDEDKQNLFVAGMSDKKIVQWDIRSGEIVQEYDRHLGAVNTIVFVDENRRFVSTSDDKSLRVWEWDIPVDFKYIAEPSMHSMPAVTLSPNGKWLACQSMDNQILIFGAQNRFRLNKKKIFKGHMVAGYACQVDFSPDMSYVISGDGNGKLNIWDWKTTKLYSRFKAHDKVCIGAVWHPHETSKVITCGWDGLIKLWD.

Positions Met1 to Glu19 are enriched in low complexity. 2 disordered regions span residues Met1–Ala34 and Asp204–Glu237. 7 WD repeats span residues Gly286 to Arg326, Gly330 to Arg369, Thr371 to Glu413, Arg416 to Tyr455, Pro459 to Lys498, Gly504 to Arg545, and Ala548 to Trp578.

Component of the catalytic spliceosome C complexes. Component of the postcatalytic spliceosome P complex. Interacts with PPIL1; this interaction leads to CDC40 isomerization. Post-translationally, undergoes isomerization of the peptide bond between Gly-94 and Pro-95. The reaction is catalyzed by PPIL1.

Its subcellular location is the nucleus. It localises to the nucleus speckle. Required for pre-mRNA splicing as component of the activated spliceosome. Plays an important role in embryonic brain development; this function does not require proline peptide bond isomerization. This is Pre-mRNA-processing factor 17 (Cdc40) from Mus musculus (Mouse).